The following is a 292-amino-acid chain: Tubulin beta chain (292 aa).

Residues Asn49 and Asn71 each contribute to the GTP site. Residues 265–292 (SEYQQYQDATAEEEGEFDEEEEGDEEAA) are disordered. Positions 274 to 292 (TAEEEGEFDEEEEGDEEAA) are enriched in acidic residues.

It belongs to the tubulin family. As to quaternary structure, dimer of alpha and beta chains. A typical microtubule is a hollow water-filled tube with an outer diameter of 25 nm and an inner diameter of 15 nM. Alpha-beta heterodimers associate head-to-tail to form protofilaments running lengthwise along the microtubule wall with the beta-tubulin subunit facing the microtubule plus end conferring a structural polarity. Microtubules usually have 13 protofilaments but different protofilament numbers can be found in some organisms and specialized cells. Mg(2+) serves as cofactor.

Its subcellular location is the cytoplasm. It is found in the cytoskeleton. In terms of biological role, tubulin is the major constituent of microtubules, a cylinder consisting of laterally associated linear protofilaments composed of alpha- and beta-tubulin heterodimers. Microtubules grow by the addition of GTP-tubulin dimers to the microtubule end, where a stabilizing cap forms. Below the cap, tubulin dimers are in GDP-bound state, owing to GTPase activity of alpha-tubulin. In Strongylocentrotus purpuratus (Purple sea urchin), this protein is Tubulin beta chain.